The primary structure comprises 392 residues: Major outer membrane porin (392 aa).

The signal sequence occupies residues 1–22; that stretch reads MKKLLKSALLFAAAGSALSLQA.

Belongs to the chlamydial porin (CP) (TC 1.B.2) family. Part of a disulfide cross-linked outer membrane complex (COMC) composed of the major outer membrane porin (MOMP), the small cysteine-rich protein (OmcA) and the large cysteine-rich periplasmic protein (OmcB).

The protein localises to the cell outer membrane. In terms of biological role, in elementary bodies (EBs, the infectious stage, which is able to survive outside the host cell) provides the structural integrity of the outer envelope through disulfide cross-links with the small cysteine-rich protein and the large cysteine-rich periplasmic protein. It has been described in publications as the Sarkosyl-insoluble COMC (Chlamydia outer membrane complex), and serves as the functional equivalent of peptidoglycan. Its function is as follows. Permits diffusion of specific solutes through the outer membrane. This is Major outer membrane porin (ompA) from Chlamydia psittaci (Chlamydophila psittaci).